The sequence spans 311 residues: Methionyl-tRNA formyltransferase (311 aa).

Residue 109 to 112 (SLLP) participates in (6S)-5,6,7,8-tetrahydrofolate binding.

It belongs to the Fmt family.

The enzyme catalyses L-methionyl-tRNA(fMet) + (6R)-10-formyltetrahydrofolate = N-formyl-L-methionyl-tRNA(fMet) + (6S)-5,6,7,8-tetrahydrofolate + H(+). In terms of biological role, attaches a formyl group to the free amino group of methionyl-tRNA(fMet). The formyl group appears to play a dual role in the initiator identity of N-formylmethionyl-tRNA by promoting its recognition by IF2 and preventing the misappropriation of this tRNA by the elongation apparatus. The protein is Methionyl-tRNA formyltransferase of Acetivibrio thermocellus (strain ATCC 27405 / DSM 1237 / JCM 9322 / NBRC 103400 / NCIMB 10682 / NRRL B-4536 / VPI 7372) (Clostridium thermocellum).